Reading from the N-terminus, the 292-residue chain is Glutamate racemase (292 aa).

Substrate-binding positions include 28 to 29 (DS) and 60 to 61 (YG). Cys-91 (proton donor/acceptor) is an active-site residue. Residue 92–93 (NT) participates in substrate binding. The active-site Proton donor/acceptor is the Cys-200. A substrate-binding site is contributed by 201 to 202 (TH).

The protein belongs to the aspartate/glutamate racemases family.

The catalysed reaction is L-glutamate = D-glutamate. Its pathway is cell wall biogenesis; peptidoglycan biosynthesis. Functionally, provides the (R)-glutamate required for cell wall biosynthesis. This chain is Glutamate racemase, found in Nostoc sp. (strain PCC 7120 / SAG 25.82 / UTEX 2576).